A 174-amino-acid polypeptide reads, in one-letter code: Co-chaperone protein HscB homolog (174 aa).

The 73-residue stretch at 2–74 (NYFELFSLLP…IQRAEHLLAL (73 aa)) folds into the J domain.

The protein belongs to the HscB family. In terms of assembly, interacts with HscA and stimulates its ATPase activity.

Its function is as follows. Co-chaperone involved in the maturation of iron-sulfur cluster-containing proteins. Seems to help targeting proteins to be folded toward HscA. This chain is Co-chaperone protein HscB homolog, found in Shewanella pealeana (strain ATCC 700345 / ANG-SQ1).